The following is a 465-amino-acid chain: Pre-mRNA-splicing factor URN1 (465 aa).

In terms of domain architecture, WW spans 1 to 32 (MRGEWQEFKTPAGKKYYYNKNTKQSRWEKPNL). 3 disordered regions span residues 28–49 (EKPN…QTER), 144–198 (ERKD…VNQD), and 266–288 (ERSG…DSEV). Residue S150 is modified to Phosphoserine. The segment covering 160–175 (LQESHTGLVSGYGSSS) has biased composition (polar residues). Over residues 176–192 (GEEDEEEDEEEDEENEE) the composition is skewed to acidic residues. Residues 212–266 (DIDERNIFFELFDRYKLDKFSTWSLQSKKIENDPDFYKIRDDTVRESLFEEWCGE) form the FF domain. Residues 274-288 (EESDSEDNSEDDSEV) are compositionally biased toward acidic residues.

In terms of assembly, component of the precatalytic spliceosomal complex B. Interacts with PRP19.

It localises to the nucleus. Component of the spliceosome involved in mRNA processing. The protein is Pre-mRNA-splicing factor URN1 (URN1) of Saccharomyces cerevisiae (strain ATCC 204508 / S288c) (Baker's yeast).